A 232-amino-acid chain; its full sequence is Phosphoglycolate phosphatase (232 aa).

Aspartate 13 (nucleophile) is an active-site residue. Positions 13, 15, and 175 each coordinate Mg(2+).

It belongs to the HAD-like hydrolase superfamily. CbbY/CbbZ/Gph/YieH family. As to quaternary structure, monomer. The cofactor is Mg(2+). Chloride is required as a cofactor.

The catalysed reaction is 2-phosphoglycolate + H2O = glycolate + phosphate. The protein operates within organic acid metabolism; glycolate biosynthesis; glycolate from 2-phosphoglycolate: step 1/1. In terms of biological role, specifically catalyzes the dephosphorylation of 2-phosphoglycolate. Is involved in the dissimilation of the intracellular 2-phosphoglycolate formed during the DNA repair of 3'-phosphoglycolate ends, a major class of DNA lesions induced by oxidative stress. The protein is Phosphoglycolate phosphatase of Yersinia pestis.